The chain runs to 449 residues: Glutamate--tRNA ligase 1 (449 aa).

A 'HIGH' region motif is present at residues 11 to 21; it reads PSPTGSLHVGN. Residues 242-246 carry the 'KMSKS' region motif; sequence PLSKR. ATP is bound at residue Lys-245.

Belongs to the class-I aminoacyl-tRNA synthetase family. Glutamate--tRNA ligase type 1 subfamily. As to quaternary structure, monomer.

It is found in the cytoplasm. It carries out the reaction tRNA(Glu) + L-glutamate + ATP = L-glutamyl-tRNA(Glu) + AMP + diphosphate. In terms of biological role, catalyzes the attachment of glutamate to tRNA(Glu) in a two-step reaction: glutamate is first activated by ATP to form Glu-AMP and then transferred to the acceptor end of tRNA(Glu). This is Glutamate--tRNA ligase 1 from Parvibaculum lavamentivorans (strain DS-1 / DSM 13023 / NCIMB 13966).